The chain runs to 74 residues: ATP synthase subunit c (74 aa).

A run of 2 helical transmembrane segments spans residues Phe-8–Ile-28 and Ile-52–Ile-72.

The protein belongs to the ATPase C chain family. F-type ATPases have 2 components, F(1) - the catalytic core - and F(0) - the membrane proton channel. F(1) has five subunits: alpha(3), beta(3), gamma(1), delta(1), epsilon(1). F(0) has three main subunits: a(1), b(2) and c(10-14). The alpha and beta chains form an alternating ring which encloses part of the gamma chain. F(1) is attached to F(0) by a central stalk formed by the gamma and epsilon chains, while a peripheral stalk is formed by the delta and b chains.

It localises to the cell inner membrane. Its function is as follows. F(1)F(0) ATP synthase produces ATP from ADP in the presence of a proton or sodium gradient. F-type ATPases consist of two structural domains, F(1) containing the extramembraneous catalytic core and F(0) containing the membrane proton channel, linked together by a central stalk and a peripheral stalk. During catalysis, ATP synthesis in the catalytic domain of F(1) is coupled via a rotary mechanism of the central stalk subunits to proton translocation. In terms of biological role, key component of the F(0) channel; it plays a direct role in translocation across the membrane. A homomeric c-ring of between 10-14 subunits forms the central stalk rotor element with the F(1) delta and epsilon subunits. The sequence is that of ATP synthase subunit c from Rickettsia akari (strain Hartford).